The primary structure comprises 515 residues: WUSCHEL-related homeobox 12 (515 aa).

2 stretches are compositionally biased toward polar residues: residues 23 to 32 (QQQPDMNGNG) and 44 to 57 (TAATTGNGKPSLLS). Disordered regions lie at residues 23 to 76 (QQQP…WNPR), 130 to 156 (NKLRAAGHHHHHGRAAALPRASAPPST), and 176 to 195 (LLAATSSSSSSSDRSSGSSK). Positions 62 to 71 (EGTRNPEPKP) are enriched in basic and acidic residues. Positions 68-132 (EPKPRWNPRP…NRKSRTKNKL (65 aa)) form a DNA-binding region, homeobox; WUS-type. A compositionally biased stretch (basic residues) spans 130–143 (NKLRAAGHHHHHGR). Composition is skewed to low complexity over residues 144 to 156 (AAALPRASAPPST) and 177 to 195 (LAATSSSSSSSDRSSGSSK).

The protein belongs to the WUS homeobox family.

It localises to the nucleus. In terms of biological role, transcription factor which may be involved in developmental processes. The chain is WUSCHEL-related homeobox 12 (WOX12) from Oryza sativa subsp. japonica (Rice).